Consider the following 331-residue polypeptide: MEIINGPVLPRYAAPATGALTSDAKISGQLLRRVHLRRRACGLQGDHYRAARRFFGFPSERHARSGWVWPVCCSYGSSSDGDGAAAADYDASGEEFVNSSVMEAVELRSVSDGFVIKMRDGKNLRCVQNNPRVLRLRDSAPHHAIVLKMEDGSDLLLPIIVMETPSIMLLAALRNIRIPRPTIYNVVKEMTERMGYAVRLVRITEMVHDAYYSRLYLAKIGNEEETISLDLKPSDAINIAFRCKVPIQVNRRIAYNNGLKVVQPTPSESYVSSDQFQCTRLDRPDDQPCFEAQEFDLVRNMLVAAVEERYKDAAQYRDQLFMFRAKKKNMI.

The region spanning 126-261 is the BFN domain; the sequence is CVQNNPRVLR…RIAYNNGLKV (136 aa). Residues 291–326 enclose the UVR domain; that stretch reads EAQEFDLVRNMLVAAVEERYKDAAQYRDQLFMFRAK.

This sequence belongs to the bifunctional nuclease family.

It localises to the nucleus. Its function is as follows. Bifunctional nuclease with both RNase and DNase activities. Involved in basal defense response. Participates in abscisic acid-derived callose deposition following infection by a necrotrophic pathogen. The protein is Bifunctional nuclease 1 (BBD1) of Oryza sativa subsp. indica (Rice).